The sequence spans 138 residues: uncharacterized protein (138 aa).

Positions 17 to 38 (LCRNDVAHEAGTNNVQIMRIEK) form a DNA-binding region, H-T-H motif.

This is an uncharacterized protein from Herpetosiphon aurantiacus (Herpetosiphon giganteus).